The primary structure comprises 87 residues: Defensin-like protein 176 (87 aa).

The first 23 residues, 1–23, serve as a signal peptide directing secretion; the sequence is MAKATSSLVVPIIFLVIFALVEQ. 4 disulfide bridges follow: C27/C66, C36/C55, C39/C60, and C43/C62.

The protein belongs to the DEFL family.

The protein localises to the secreted. This Arabidopsis thaliana (Mouse-ear cress) protein is Defensin-like protein 176 (LCR65).